The chain runs to 897 residues: Transportin-2 (897 aa).

HEAT repeat units follow at residues Gly9 to Lys36, Phe41 to Gln79, Phe88 to Leu121, Leu127 to Asp164, Asn171 to Met201, Phe214 to Leu241, His253 to Thr280, Val296 to Val386, His394 to Ala422, Pro434 to Arg461, Leu475 to Ala508, Leu516 to Val549, Glu557 to Gln595, Glu603 to Gly654, Ile665 to Phe696, Ala704 to Gly737, Gln745 to Pro790, Gln798 to Asn831, Ile840 to Val871, and Asp874 to Phe894. In terms of domain architecture, Importin N-terminal spans Val31–Asp99. Positions Ala325–Asp364 are disordered. The span at Ser355–Asp364 shows a compositional bias: acidic residues. Lys862 carries the N6-acetyllysine modification.

It belongs to the importin beta family. Importin beta-2 subfamily.

It is found in the cytoplasm. It localises to the nucleus. In terms of biological role, probably functions in nuclear protein import as nuclear transport receptor. Serves as receptor for nuclear localization signals (NLS) in cargo substrates. Is thought to mediate docking of the importin/substrate complex to the nuclear pore complex (NPC) through binding to nucleoporin and the complex is subsequently translocated through the pore by an energy requiring, Ran-dependent mechanism. At the nucleoplasmic side of the NPC, Ran binds to the importin, the importin/substrate complex dissociates and importin is re-exported from the nucleus to the cytoplasm where GTP hydrolysis releases Ran. The directionality of nuclear import is thought to be conferred by an asymmetric distribution of the GTP- and GDP-bound forms of Ran between the cytoplasm and nucleus. In Homo sapiens (Human), this protein is Transportin-2 (TNPO2).